The primary structure comprises 94 residues: DNA-binding protein HU (94 aa).

The interval 55–94 (RAERPGRNPKTGEPIMIAASNNPSFKPGKALKDAVKSSAG) is disordered. Residues 84–94 (ALKDAVKSSAG) show a composition bias toward basic and acidic residues.

Belongs to the bacterial histone-like protein family.

Its function is as follows. Histone-like DNA-binding protein which is capable of wrapping DNA to stabilize it, and thus to prevent its denaturation under extreme environmental conditions. The chain is DNA-binding protein HU (hup) from Xylella fastidiosa (strain Temecula1 / ATCC 700964).